The following is an 839-amino-acid chain: Thymine dioxygenase JBP1 (839 aa).

A thymine dioxygenase region spans residues 86-288; sequence KVCGVLIPKA…RLSCVFYYRA (203 aa). Fe cation-binding residues include histidine 213, aspartate 215, and histidine 263. Residue arginine 279 participates in 2-oxoglutarate binding. Residues 415-583 are DNA-binding JBP1 domain; it reads KGDILNEAMN…EIEQARRRAP (169 aa).

This sequence belongs to the TET family. JBP1 subfamily. In terms of assembly, monomer. Binds to DNA as a monomer. Fe(2+) serves as cofactor.

It localises to the nucleus. The enzyme catalyses thymine + 2-oxoglutarate + O2 = 5-hydroxymethyluracil + succinate + CO2. Functionally, dioxygenase that catalyzes the first step of DNA base J (beta-d-glucosyl-HOMedU) biosynthesis by converting thymine to 5-hydroxymethyluracil (HOMedU). DNA base J is a hypermodified thymidine residue found in the genome of kinetoplastid parasites, which is localized primarily to repetitive DNA, namely the telomeres, and is implicated in the regulation of antigenic variation. Also specifically binds to base J-containing DNA (J-DNA). Involved in propagation and maintenance of DNA base J synthesis initiated by JBP2 by specifically binding already synthesized DNA base J and propagating J synthesis. Thymine dioxygenase activity and J-DNA-binding are independent functions. The chain is Thymine dioxygenase JBP1 (JBP1) from Trypanosoma brucei brucei (strain 927/4 GUTat10.1).